The chain runs to 498 residues: MRINPTTSGPGVSTLEERNLGRITQIIGPVLDVAFPPGKMPNIYNSLVVKGRDTVGQQINVTCEVQQLLGNNRIRAVAMSATDGLMRGMEVIDTGAPLSVPVGGSTLGRIFNVLGEPVDNLGPVDTCTTSPIHRSAPAFIQLDTKFSIFETGIKVVDLLAPYRRGGKIGLFGGAGVGKTVLIMELINNIAKAHGGVSVSGGVGERTREGNDLYMEMKESGVINEQNIAESKVALVYGQMNEPPGARMRVGLTALTMAEYFRDVNEQDVLLFIDNISRFVQAGSEVSALLGRMPSAVGYQPTLSTEMGSLQERITSTKEGSITSIQAVYVPADDLTDPAPATTFAHLDATTVLSRGLAAKGIYPAVDPLGSTSTMLQPRIVGEKHYETAQRVKQTSQRYKELQDIIAILGLDELSEEDRLTVARARKIERFLSQPFFVAEVFTGSPGKYVGLAETIRGFQLILSGELDGLPEQAFYLVGNIDEATAKAMNLEVESKLKK.

ATP is bound at residue 172-179 (GGAGVGKT).

It belongs to the ATPase alpha/beta chains family. As to quaternary structure, F-type ATPases have 2 components, CF(1) - the catalytic core - and CF(0) - the membrane proton channel. CF(1) has five subunits: alpha(3), beta(3), gamma(1), delta(1), epsilon(1). CF(0) has four main subunits: a(1), b(1), b'(1) and c(9-12).

Its subcellular location is the plastid. It localises to the chloroplast thylakoid membrane. The enzyme catalyses ATP + H2O + 4 H(+)(in) = ADP + phosphate + 5 H(+)(out). Produces ATP from ADP in the presence of a proton gradient across the membrane. The catalytic sites are hosted primarily by the beta subunits. This chain is ATP synthase subunit beta, chloroplastic, found in Illicium oligandrum (Star anise).